The sequence spans 465 residues: GTPase Der (465 aa).

2 EngA-type G domains span residues 27–190 (PVLA…PEAP) and 202–375 (RRIA…AGWE). GTP contacts are provided by residues 33 to 40 (GRPNVGKS), 80 to 84 (DTGGW), 142 to 145 (NKVD), 208 to 215 (GRPNVGKS), 255 to 259 (DTAGI), and 320 to 323 (NKWD). The KH-like domain maps to 376 to 458 (TRVPTGRLNA…PIHISVRVRE (83 aa)).

The protein belongs to the TRAFAC class TrmE-Era-EngA-EngB-Septin-like GTPase superfamily. EngA (Der) GTPase family. Associates with the 50S ribosomal subunit.

Functionally, GTPase that plays an essential role in the late steps of ribosome biogenesis. This Streptomyces coelicolor (strain ATCC BAA-471 / A3(2) / M145) protein is GTPase Der.